A 276-amino-acid polypeptide reads, in one-letter code: uncharacterized protein (276 aa).

Position 15 to 22 (15 to 22 (GKGGVGKS)) interacts with ATP. 2 consecutive 4Fe-4S ferredoxin-type domains span residues 68-96 (EIYE…DFKI) and 92-121 (GDFK…PIKR). [4Fe-4S] cluster is bound by residues Cys76, Cys79, Cys82, Cys86, Cys101, Cys104, Cys107, and Cys111.

This is an uncharacterized protein from Methanocaldococcus jannaschii (strain ATCC 43067 / DSM 2661 / JAL-1 / JCM 10045 / NBRC 100440) (Methanococcus jannaschii).